We begin with the raw amino-acid sequence, 568 residues long: Probable asparagine--tRNA ligase, cytoplasmic (568 aa).

The protein belongs to the class-II aminoacyl-tRNA synthetase family.

The protein localises to the cytoplasm. The catalysed reaction is tRNA(Asn) + L-asparagine + ATP = L-asparaginyl-tRNA(Asn) + AMP + diphosphate + H(+). Its function is as follows. Cytosolic asparaginyl-tRNA synthetase which catalyzes the specific attachment of asparagine to its cognate tRNA. The protein is Probable asparagine--tRNA ligase, cytoplasmic (nrs1) of Schizosaccharomyces pombe (strain 972 / ATCC 24843) (Fission yeast).